The chain runs to 651 residues: LysM domain receptor-like kinase 3 (651 aa).

An N-terminal signal peptide occupies residues 1 to 19 (MNLTFYIFFLSLLPSFSSS). N-linked (GlcNAc...) asparagine glycans are attached at residues Asn2, Asn23, Asn42, Asn73, Asn86, Asn100, Asn114, and Asn177. Residues 20–236 (KPMNCSDTTR…TAKSGSHVPY (217 aa)) lie on the Extracellular side of the membrane. Disulfide bonds link Cys24-Cys76, Cys31-Cys133, and Cys74-Cys131. Positions 142–186 (MSYVAMAGDSVQSLSSRFGVSMDRIEDVNGILNLDNITAGDLLYI) constitute a LysM domain. The disordered stretch occupies residues 196-216 (YETSKINPPAPSPAPASSLAN). N-linked (GlcNAc...) asparagine glycans are attached at residues Asn218 and Asn225. A helical membrane pass occupies residues 237–257 (IWIVGGLGVVLALLVLCILVC). Residues 258 to 651 (ICLRSSSCSS…QVFSGLVQGR (394 aa)) lie on the Cytoplasmic side of the membrane. Thr330 bears the Phosphothreonine mark. The Protein kinase domain maps to 341–628 (FSDSNLLGHG…VVISLSQILL (288 aa)). ATP contacts are provided by residues 347–355 (LGHGNYGSV) and Lys368. The residue at position 410 (Tyr410) is a Phosphotyrosine. Residue Asp464 is the Proton acceptor of the active site. Residue Ser468 is modified to Phosphoserine. 2 positions are modified to phosphothreonine: Thr500 and Thr505. The residue at position 513 (Tyr513) is a Phosphotyrosine.

This sequence belongs to the protein kinase superfamily. Ser/Thr protein kinase family.

Its subcellular location is the cell membrane. Putative Lysin motif (LysM) receptor kinase that may recognize microbe-derived N-acetylglucosamine (NAG)-containing ligands. This is LysM domain receptor-like kinase 3 (LYK3) from Arabidopsis thaliana (Mouse-ear cress).